The sequence spans 301 residues: Prohibitin-2 (301 aa).

2 necessary for transcriptional repression regions span residues 19-49 (VGTA…GQRA) and 150-174 (ASQL…RAKD). A coiled-coil region spans residues 190–237 (SREYTAAVEAKQVAQQEAQRAQFLVEKAKQEQKQKIVQAEGEATAAKM).

It belongs to the prohibitin family. In terms of assembly, the mitochondrial prohibitin complex consists of two subunits (PHB1 and PHB2), assembled into a membrane-associated ring-shaped supercomplex of approximately 1 mDa.

It localises to the mitochondrion inner membrane. It is found in the cytoplasm. The protein localises to the nucleus. The protein resides in the cell membrane. Functionally, protein with pleiotropic attributes mediated in a cell-compartment- and tissue-specific manner, which include the plasma membrane-associated cell signaling functions, mitochondrial chaperone, and transcriptional co-regulator of transcription factors and sex steroid hormones in the nucleus. In the mitochondria, together with PHB, forms large ring complexes (prohibitin complexes) in the inner mitochondrial membrane (IMM) and functions as a chaperone protein that stabilizes mitochondrial respiratory enzymes and maintains mitochondrial integrity in the IMM, which is required for mitochondrial morphogenesis, neuronal survival, and normal lifespan. In terms of biological role, in the nucleus, serves as transcriptional co-regulator. The protein is Prohibitin-2 (PHB2) of Gallus gallus (Chicken).